Consider the following 396-residue polypeptide: Acetate kinase (396 aa).

Asn8 lines the Mg(2+) pocket. Lys15 contacts ATP. Arg89 is a binding site for substrate. Asp146 (proton donor/acceptor) is an active-site residue. Residues His206 to Gly210, Asp283 to Arg285, and Gly331 to Asn335 contribute to the ATP site. Mg(2+) is bound at residue Glu383.

It belongs to the acetokinase family. In terms of assembly, homodimer. Requires Mg(2+) as cofactor. Mn(2+) is required as a cofactor.

Its subcellular location is the cytoplasm. The catalysed reaction is acetate + ATP = acetyl phosphate + ADP. The protein operates within metabolic intermediate biosynthesis; acetyl-CoA biosynthesis; acetyl-CoA from acetate: step 1/2. In terms of biological role, catalyzes the formation of acetyl phosphate from acetate and ATP. Can also catalyze the reverse reaction. In Streptococcus pneumoniae (strain JJA), this protein is Acetate kinase.